The following is a 200-amino-acid chain: Male-specific histamine-binding salivary protein (200 aa).

A signal peptide spans 1–18 (MKVLLLVLGAALCQNADA). Histamine-binding residues include Ser37, Asp41, Asp56, and Trp59. 2 cysteine pairs are disulfide-bonded: Cys65–Cys193 and Cys137–Cys169. Asn79 is a glycosylation site (N-linked (GlcNAc...) asparagine). Histamine is bound by residues Glu97, Tyr115, Phe125, Asp138, Glu154, and Trp156.

It belongs to the calycin superfamily. Histamine-binding salivary protein family. As to quaternary structure, homodimer; disulcde-linked. In terms of processing, N-glycosylated. Expressed in salivary glands.

It localises to the secreted. Functionally, salivary tick protein that acts by scavenging histamine at the wound site, outcompeting histamine receptors for histamine, thereby overcoming host inflammatory responses. Binds histamine with a high-affinity (Kd=1.2 nM). Contains two binding histamine sites (H and L), that appear to bind histamine with differing affinities. In Rhipicephalus appendiculatus (Brown ear tick), this protein is Male-specific histamine-binding salivary protein.